The chain runs to 537 residues: Bifunctional purine biosynthesis protein PurH (537 aa).

The MGS-like domain maps to 8-158 (IPAPDLVPVR…KNHAYVAVVT (151 aa)).

Belongs to the PurH family.

The catalysed reaction is (6R)-10-formyltetrahydrofolate + 5-amino-1-(5-phospho-beta-D-ribosyl)imidazole-4-carboxamide = 5-formamido-1-(5-phospho-D-ribosyl)imidazole-4-carboxamide + (6S)-5,6,7,8-tetrahydrofolate. The enzyme catalyses IMP + H2O = 5-formamido-1-(5-phospho-D-ribosyl)imidazole-4-carboxamide. Its pathway is purine metabolism; IMP biosynthesis via de novo pathway; 5-formamido-1-(5-phospho-D-ribosyl)imidazole-4-carboxamide from 5-amino-1-(5-phospho-D-ribosyl)imidazole-4-carboxamide (10-formyl THF route): step 1/1. It functions in the pathway purine metabolism; IMP biosynthesis via de novo pathway; IMP from 5-formamido-1-(5-phospho-D-ribosyl)imidazole-4-carboxamide: step 1/1. This Chelativorans sp. (strain BNC1) protein is Bifunctional purine biosynthesis protein PurH.